The following is a 504-amino-acid chain: Probable chlorophyll(ide) b reductase NYC1, chloroplastic (504 aa).

The N-terminal 33 residues, 1–33 (MAAAAVVHLSVHGRLRRSPELHARPYHRPSLLR), are a transit peptide targeting the chloroplast. The segment at 41-63 (ADNGGEEASSSPPPPTTAEARRR) is disordered. A run of 2 helical transmembrane segments spans residues 114 to 134 (YVIT…LSGG) and 141 to 161 (LIWY…ANSV). 175–199 (ITGSTRGLGKALAREFLLSGDRVVI) is a binding site for NAD(+). Tyr339 acts as the Proton acceptor in catalysis. A helical transmembrane segment spans residues 479-499 (WVSVFSLSVVCAFIILSSSGG).

This sequence belongs to the short-chain dehydrogenases/reductases (SDR) family. In terms of assembly, interacts with NOL to form a complex that acts as a chlorophyll b reductase. As to expression, expressed in leaves and stems. Also detected in non-photosynthetic tissues such as roots.

It localises to the plastid. It is found in the chloroplast thylakoid membrane. It catalyses the reaction 7(1)-hydroxychlorophyllide a + NAD(+) = chlorophyllide b + NADH + H(+). The enzyme catalyses 7(1)-hydroxychlorophyllide a + NADP(+) = chlorophyllide b + NADPH + H(+). In terms of biological role, required for proper chloroplast degradation. Involved in chlorophyll b degradation. The protein is Probable chlorophyll(ide) b reductase NYC1, chloroplastic (NYC1) of Oryza sativa subsp. japonica (Rice).